A 281-amino-acid chain; its full sequence is BEN domain-containing protein 6 (281 aa).

2 disordered regions span residues 15-62 (VLRK…ETPL) and 143-172 (SFAS…PGEK). Positions 19-99 (RKRKRTETAN…RLRQSLVMLQ (81 aa)) form a coiled coil. Residues 143–160 (SFASLCSNSNSTSSSPSS) are compositionally biased toward low complexity. Residues 162 to 172 (KAEEEQHPGEK) are compositionally biased toward basic and acidic residues. Residues 171-271 (EKQFTIERWQ…NCTKKPNASK (101 aa)) form the BEN domain.

Interacts (via BEN domain) with RBPJ.

The protein resides in the nucleus. Acts as a corepressor of recombining binding protein suppressor hairless (RBPJ) and inhibits Notch signaling in neural stem cells, thereby opposing their self-renewal and promoting neurogenesis. The sequence is that of BEN domain-containing protein 6 (Bend6) from Mus musculus (Mouse).